The sequence spans 651 residues: tRNA uridine 5-carboxymethylaminomethyl modification enzyme MnmG (651 aa).

An FAD-binding site is contributed by 11-16 (GAGHAG). Residue 296–310 (GPRYCPSIEDKIVRF) participates in NAD(+) binding.

This sequence belongs to the MnmG family. Homodimer. Heterotetramer of two MnmE and two MnmG subunits. Requires FAD as cofactor.

It is found in the cytoplasm. Functionally, NAD-binding protein involved in the addition of a carboxymethylaminomethyl (cmnm) group at the wobble position (U34) of certain tRNAs, forming tRNA-cmnm(5)s(2)U34. This Chloroflexus aurantiacus (strain ATCC 29366 / DSM 635 / J-10-fl) protein is tRNA uridine 5-carboxymethylaminomethyl modification enzyme MnmG.